Here is a 234-residue protein sequence, read N- to C-terminus: Phosphoribosylaminoimidazole-succinocarboxamide synthase (234 aa).

The protein belongs to the SAICAR synthetase family.

The enzyme catalyses 5-amino-1-(5-phospho-D-ribosyl)imidazole-4-carboxylate + L-aspartate + ATP = (2S)-2-[5-amino-1-(5-phospho-beta-D-ribosyl)imidazole-4-carboxamido]succinate + ADP + phosphate + 2 H(+). It functions in the pathway purine metabolism; IMP biosynthesis via de novo pathway; 5-amino-1-(5-phospho-D-ribosyl)imidazole-4-carboxamide from 5-amino-1-(5-phospho-D-ribosyl)imidazole-4-carboxylate: step 1/2. This chain is Phosphoribosylaminoimidazole-succinocarboxamide synthase, found in Exiguobacterium sp. (strain ATCC BAA-1283 / AT1b).